The primary structure comprises 1093 residues: MPFDVLISNQKDNTNHQNITPISKSVLLAPHSNHPVIEIATYSETDVYECYIRGFETKIVMRRTKDDWINITQVFKIAQFSKTKRTKILEKESNDMQHEKVQGGYGRFQGTWIPLDSAKFLVNKYEIIDPVVNSILTFQFDPNNPPPKRSKNSILRKTSPGTKITSPSSYNKTPRKKNSSSSTSATTTAANKKGKKNASINQPNPSPLQNLVFQTPQQFQVNSSMNIMNNNDNHTTMNFNNDTRHNLINNISNNSNQSTIIQQQKSIHENSFNNNYSATQKPLQFFPIPTNLQNKNVALNNPNNNDSNSYSHNIDNVINSSNNNNNGNNNNLIIVPDGPMQSQQQQQHHHEYLTNNFNHSMMDSITNGNSKKRRKKLNQSNEQQFYNQQEKIQRHFKLMKQPLLWQSFQNPNDHHNEYCDSNGSNNNNNTVASNGSSIEVFSSNENDNSMNMSSRSMTPFSAGNTSSQNKLENKMTDQEYKQTILTILSSERSSDVDQALLATLYPAPKNFNINFEIDDQGHTPLHWATAMANIPLIKMLITLNANALQCNKLGFNCITKSIFYNNCYKENAFDEIISILKICLITPDVNGRLPFHYLIELSVNKSKNPMIIKSYMDSIILSLGQQDYNLLKICLNYQDNIGNTPLHLSALNLNFEVYNRLVYLGASTDILNLDNESPASIMNKFNTPAGGSNSRNNNTKADRKLARNLPQKNYYQQQQQQQQPQNNVKIPKIIKTQHPDKEDSTADVNIAKTDSEVNESQYLHSNQPNSTNMNTIMEDLSNINSFVTSSVIKDIKSTPSKILENSPILYRRRSQSISDEKEKAKDNENQVEKKKDPLNSVKTAMPSLESPSSLLPIQMSPLGKYSKPLSQQINKLNTKVSSLQRIMGEEIKNLDNEVVETESSISNNKKRLITIAHQIEDAFDSVSNKTPINSISDLQSRIKETSSKLNSEKQNFIQSLEKSQALKLATIVQDEESKVDMNTNSSSHPEKQEDEEPIPKSTSETSSPKNTKADAKFSNTVQESYDVNETLRLATELTILQFKRRMTTLKISEAKSKINSSVKLDKYRNLIGITIENIDSKLDDIEKDLRANA.

Residues 37–147 (IEIATYSETD…FQFDPNNPPP (111 aa)) form the HTH APSES-type domain. Residues 71–92 (ITQVFKIAQFSKTKRTKILEKE) constitute a DNA-binding region (H-T-H motif). The segment at 138–210 (FQFDPNNPPP…NQPNPSPLQN (73 aa)) is disordered. Residues 152 to 172 (NSILRKTSPGTKITSPSSYNK) show a composition bias toward polar residues. A compositionally biased stretch (low complexity) spans 179 to 201 (SSSSTSATTTAANKKGKKNASIN). At S255 the chain carries Phosphoserine. Over residues 448–457 (NSMNMSSRSM) the composition is skewed to low complexity. The disordered stretch occupies residues 448 to 468 (NSMNMSSRSMTPFSAGNTSSQ). Residues 458–468 (TPFSAGNTSSQ) show a composition bias toward polar residues. ANK repeat units lie at residues 520 to 549 (QGHT…NALQ) and 641 to 670 (IGNT…STDI). Position 806 is a phosphoserine (S806). 2 disordered regions span residues 813 to 855 (RSQS…SSLL) and 973 to 1017 (QDEE…DAKF). Over residues 818–837 (SDEKEKAKDNENQVEKKKDP) the composition is skewed to basic and acidic residues. The span at 846-855 (PSLESPSSLL) shows a compositional bias: low complexity. Over residues 1000-1010 (KSTSETSSPKN) the composition is skewed to polar residues.

In terms of assembly, component of the transcription complex SCB-binding factor (SBF) composed of SWI6 and SWI4. Interacts with MSA2.

Its function is as follows. Part of a complex involved in cell-cycle-dependent transcription. SWI4 and SWI6 are required for formation of the cell-cycle box factor-DNA complex. The repeated element in the upstream region of HO (5'-CACGAAAA-3') is called the cell cycle box (CCB). The sequence is that of Regulatory protein SWI4 (SWI4) from Saccharomyces cerevisiae (strain ATCC 204508 / S288c) (Baker's yeast).